A 256-amino-acid polypeptide reads, in one-letter code: 5'-nucleotidase YutF (256 aa).

The protein belongs to the HAD-like hydrolase superfamily. NagD family. As to quaternary structure, homodimer. Mg(2+) serves as cofactor.

It localises to the cytoplasm. It catalyses the reaction a ribonucleoside 5'-phosphate + H2O = a ribonucleoside + phosphate. The enzyme catalyses XMP + H2O = xanthosine + phosphate. Catalyzes the hydrolysis of various purine and pyrimidine 5'-nucleotides, showing preference for 5'-nucleoside monophosphates and exhibiting the highest catalytic activity toward 5'-XMP. Also shows a relatively high phosphohydrolase activity toward the nucleotide precursors ribose-5-phosphate (R5P) and 5-phosphoribosyl-1-pyrophosphate (PRPP), and toward the non-natural substrate p-nitrophenyl phosphate (pNPP). The sequence is that of 5'-nucleotidase YutF (yutF) from Bacillus subtilis (strain 168).